The sequence spans 56 residues: Large ribosomal subunit protein bL32 (56 aa).

The tract at residues 1 to 28 (MAVQQNRKTRSKRGMRRSHDALTTAALS) is disordered. The segment covering 7–16 (RKTRSKRGMR) has biased composition (basic residues).

The protein belongs to the bacterial ribosomal protein bL32 family.

The chain is Large ribosomal subunit protein bL32 from Vibrio vulnificus (strain CMCP6).